Consider the following 257-residue polypeptide: Imidazole glycerol phosphate synthase subunit HisF (257 aa).

Residues Asp11 and Asp130 contribute to the active site.

This sequence belongs to the HisA/HisF family. As to quaternary structure, heterodimer of HisH and HisF.

The protein resides in the cytoplasm. It carries out the reaction 5-[(5-phospho-1-deoxy-D-ribulos-1-ylimino)methylamino]-1-(5-phospho-beta-D-ribosyl)imidazole-4-carboxamide + L-glutamine = D-erythro-1-(imidazol-4-yl)glycerol 3-phosphate + 5-amino-1-(5-phospho-beta-D-ribosyl)imidazole-4-carboxamide + L-glutamate + H(+). Its pathway is amino-acid biosynthesis; L-histidine biosynthesis; L-histidine from 5-phospho-alpha-D-ribose 1-diphosphate: step 5/9. IGPS catalyzes the conversion of PRFAR and glutamine to IGP, AICAR and glutamate. The HisF subunit catalyzes the cyclization activity that produces IGP and AICAR from PRFAR using the ammonia provided by the HisH subunit. The polypeptide is Imidazole glycerol phosphate synthase subunit HisF (Shewanella sp. (strain MR-7)).